The following is a 542-amino-acid chain: CTP synthase (542 aa).

The interval 1–265 (MTRFIFITGG…DTQVLKFFGM (265 aa)) is amidoligase domain. A CTP-binding site is contributed by serine 13. Serine 13 provides a ligand contact to UTP. 14 to 19 (SLGKGL) contributes to the ATP binding site. Tyrosine 54 is an L-glutamine binding site. Aspartate 71 is a binding site for ATP. Mg(2+) is bound by residues aspartate 71 and glutamate 139. CTP-binding positions include 146–148 (DIE), 186–191 (KTKPTQ), and lysine 222. UTP is bound by residues 186 to 191 (KTKPTQ) and lysine 222. One can recognise a Glutamine amidotransferase type-1 domain in the interval 291–541 (TIAVVGKYTS…IRAAIEQSRL (251 aa)). An L-glutamine-binding site is contributed by glycine 353. Catalysis depends on cysteine 380, which acts as the Nucleophile; for glutamine hydrolysis. Residues 381–384 (FGMQ), glutamate 404, and arginine 469 contribute to the L-glutamine site. Active-site residues include histidine 514 and glutamate 516.

It belongs to the CTP synthase family. As to quaternary structure, homotetramer.

The enzyme catalyses UTP + L-glutamine + ATP + H2O = CTP + L-glutamate + ADP + phosphate + 2 H(+). The catalysed reaction is L-glutamine + H2O = L-glutamate + NH4(+). It carries out the reaction UTP + NH4(+) + ATP = CTP + ADP + phosphate + 2 H(+). It participates in pyrimidine metabolism; CTP biosynthesis via de novo pathway; CTP from UDP: step 2/2. Its activity is regulated as follows. Allosterically activated by GTP, when glutamine is the substrate; GTP has no effect on the reaction when ammonia is the substrate. The allosteric effector GTP functions by stabilizing the protein conformation that binds the tetrahedral intermediate(s) formed during glutamine hydrolysis. Inhibited by the product CTP, via allosteric rather than competitive inhibition. Functionally, catalyzes the ATP-dependent amination of UTP to CTP with either L-glutamine or ammonia as the source of nitrogen. Regulates intracellular CTP levels through interactions with the four ribonucleotide triphosphates. This Rhodospirillum centenum (strain ATCC 51521 / SW) protein is CTP synthase.